Here is a 494-residue protein sequence, read N- to C-terminus: Cobyric acid synthase (494 aa).

A GATase cobBQ-type domain is found at 248–445 (ELEIAVLKLP…LHGIFDNGPW (198 aa)). The active-site Nucleophile is the cysteine 329. Residue histidine 437 is part of the active site.

Belongs to the CobB/CobQ family. CobQ subfamily.

Its pathway is cofactor biosynthesis; adenosylcobalamin biosynthesis. In terms of biological role, catalyzes amidations at positions B, D, E, and G on adenosylcobyrinic A,C-diamide. NH(2) groups are provided by glutamine, and one molecule of ATP is hydrogenolyzed for each amidation. The protein is Cobyric acid synthase of Synechococcus sp. (strain WH7803).